Consider the following 273-residue polypeptide: Release factor glutamine methyltransferase (273 aa).

S-adenosyl-L-methionine is bound by residues 109 to 113, Asp132, Trp159, and Asn176; that span reads GTGSG. 176 to 179 contributes to the substrate binding site; that stretch reads NPPY.

It belongs to the protein N5-glutamine methyltransferase family. PrmC subfamily.

It carries out the reaction L-glutaminyl-[peptide chain release factor] + S-adenosyl-L-methionine = N(5)-methyl-L-glutaminyl-[peptide chain release factor] + S-adenosyl-L-homocysteine + H(+). Its function is as follows. Methylates the class 1 translation termination release factors RF1/PrfA and RF2/PrfB on the glutamine residue of the universally conserved GGQ motif. This is Release factor glutamine methyltransferase from Neisseria gonorrhoeae (strain ATCC 700825 / FA 1090).